An 83-amino-acid chain; its full sequence is MSSGGLLLLLGLLTLWEVLTPVSSKDRPDFCELPADTGPCRVGFPSFYYNPDEKKCLEFIYGGCEGNANNFITKEECESTCAA.

The signal sequence occupies residues 1 to 24 (MSSGGLLLLLGLLTLWEVLTPVSS). The BPTI/Kunitz inhibitor domain maps to 31 to 81 (CELPADTGPCRVGFPSFYYNPDEKKCLEFIYGGCEGNANNFITKEECESTC). Cystine bridges form between Cys-31/Cys-81, Cys-40/Cys-64, and Cys-56/Cys-77.

This sequence belongs to the venom Kunitz-type family. In terms of tissue distribution, expressed by the venom gland.

It is found in the secreted. Serine protease inhibitor. This Oxyuranus microlepidotus (Inland taipan) protein is Kunitz-type serine protease inhibitor microlepidin-2.